The sequence spans 505 residues: Maturase K (505 aa).

Belongs to the intron maturase 2 family. MatK subfamily.

The protein resides in the plastid. It localises to the chloroplast. In terms of biological role, usually encoded in the trnK tRNA gene intron. Probably assists in splicing its own and other chloroplast group II introns. The polypeptide is Maturase K (Physcomitrium patens (Spreading-leaved earth moss)).